Here is a 533-residue protein sequence, read N- to C-terminus: Retinoid isomerohydrolase (533 aa).

S2 carries the N-acetylserine modification. A phosphothreonine mark is found at T101 and T105. C112 carries the S-palmitoyl cysteine; in membrane form lipid modification. The residue at position 113 (K113) is an N6-acetyllysine. S117 is modified (phosphoserine). H180 contributes to the Fe cation binding site. The S-palmitoyl cysteine; in membrane form moiety is linked to residue C231. Residues H241 and H313 each contribute to the Fe cation site. S-palmitoyl cysteine; in membrane form attachment occurs at residues C329 and C330. H527 is a binding site for Fe cation.

Belongs to the carotenoid oxygenase family. In terms of assembly, interacts with MYO7A; this mediates light-dependent intracellular transport of RPE65. It depends on Fe(2+) as a cofactor. Post-translationally, palmitoylation by LRAT regulates ligand binding specificity; the palmitoylated form (membrane form) specifically binds all-trans-retinyl-palmitate, while the soluble unpalmitoylated form binds all-trans-retinol (vitamin A). In terms of tissue distribution, retinal pigment epithelium specific.

It localises to the cytoplasm. Its subcellular location is the cell membrane. The protein resides in the microsome membrane. It catalyses the reaction an all-trans-retinyl ester + H2O = 11-cis-retinol + a fatty acid + H(+). It carries out the reaction lutein = (3R,3'S)-zeaxanthin. The catalysed reaction is all-trans-retinyl hexadecanoate + H2O = 11-cis-retinol + hexadecanoate + H(+). In terms of biological role, critical isomerohydrolase in the retinoid cycle involved in regeneration of 11-cis-retinal, the chromophore of rod and cone opsins. Catalyzes the cleavage and isomerization of all-trans-retinyl fatty acid esters to 11-cis-retinol which is further oxidized by 11-cis retinol dehydrogenase to 11-cis-retinal for use as visual chromophore. Essential for the production of 11-cis retinal for both rod and cone photoreceptors. Also capable of catalyzing the isomerization of lutein to meso-zeaxanthin an eye-specific carotenoid. The soluble form binds vitamin A (all-trans-retinol), making it available for LRAT processing to all-trans-retinyl ester. The membrane form, palmitoylated by LRAT, binds all-trans-retinyl esters, making them available for IMH (isomerohydrolase) processing to all-cis-retinol. The soluble form is regenerated by transferring its palmitoyl groups onto 11-cis-retinol, a reaction catalyzed by LRAT. The sequence is that of Retinoid isomerohydrolase (RPE65) from Canis lupus familiaris (Dog).